Consider the following 422-residue polypeptide: Ornithine decarboxylase (422 aa).

Lys-71 carries the post-translational modification N6-(pyridoxal phosphate)lysine. Pyridoxal 5'-phosphate is bound by residues Ser-203, Gly-240, and 275-278; that span reads EPGR. A substrate-binding site is contributed by 331 to 332; sequence FD. The Proton donor; shared with dimeric partner role is filled by Cys-359. Residue Asp-360 coordinates substrate. Residue Tyr-388 participates in pyridoxal 5'-phosphate binding.

Belongs to the Orn/Lys/Arg decarboxylase class-II family. Homodimer. Only the dimer is catalytically active, as the active sites are constructed of residues from both monomers. Pyridoxal 5'-phosphate is required as a cofactor.

It carries out the reaction L-ornithine + H(+) = putrescine + CO2. The protein operates within amine and polyamine biosynthesis; putrescine biosynthesis via L-ornithine pathway; putrescine from L-ornithine: step 1/1. Its activity is regulated as follows. Inhibited by antizyme (AZ) in response to polyamine levels. AZ inhibits the assembly of the functional homodimer by binding to ODC monomers and targeting them for ubiquitin-independent proteolytic destruction by the 26S proteasome. In terms of biological role, catalyzes the first and rate-limiting step of polyamine biosynthesis that converts ornithine into putrescine, which is the precursor for the polyamines, spermidine and spermine. Polyamines are essential for cell proliferation and are implicated in cellular processes, ranging from DNA replication to apoptosis. In Caenorhabditis elegans, this protein is Ornithine decarboxylase.